The following is a 201-amino-acid chain: Endoribonuclease YbeY (201 aa).

Zn(2+) is bound by residues His-156, His-160, and His-166.

Belongs to the endoribonuclease YbeY family. The cofactor is Zn(2+).

It is found in the cytoplasm. Single strand-specific metallo-endoribonuclease involved in late-stage 70S ribosome quality control and in maturation of the 3' terminus of the 16S rRNA. The sequence is that of Endoribonuclease YbeY from Cupriavidus pinatubonensis (strain JMP 134 / LMG 1197) (Cupriavidus necator (strain JMP 134)).